A 205-amino-acid polypeptide reads, in one-letter code: Large ribosomal subunit protein uL3c (205 aa).

Positions 127–153 (HFSRGPMSHGSKNHRQPGSIGAGTTPG) are disordered.

The protein belongs to the universal ribosomal protein uL3 family. As to quaternary structure, part of the 50S ribosomal subunit.

Its subcellular location is the plastid. The protein resides in the chloroplast. One of the primary rRNA binding proteins, it binds directly near the 3'-end of the 23S rRNA, where it nucleates assembly of the 50S subunit. The chain is Large ribosomal subunit protein uL3c (rpl3) from Porphyra purpurea (Red seaweed).